Reading from the N-terminus, the 150-residue chain is Deoxyuridine 5'-triphosphate nucleotidohydrolase (150 aa).

Substrate is bound by residues 68 to 70 (RSG), Asn-81, 85 to 87 (TID), and Lys-95.

This sequence belongs to the dUTPase family. It depends on Mg(2+) as a cofactor.

It carries out the reaction dUTP + H2O = dUMP + diphosphate + H(+). The protein operates within pyrimidine metabolism; dUMP biosynthesis; dUMP from dCTP (dUTP route): step 2/2. This enzyme is involved in nucleotide metabolism: it produces dUMP, the immediate precursor of thymidine nucleotides and it decreases the intracellular concentration of dUTP so that uracil cannot be incorporated into DNA. The protein is Deoxyuridine 5'-triphosphate nucleotidohydrolase of Rickettsia bellii (strain OSU 85-389).